The sequence spans 477 residues: Glutamate--tRNA ligase (477 aa).

Residues 8-18 (PSPTGTLHIGT) carry the 'HIGH' region motif. The short motif at 247–251 (KLSKR) is the 'KMSKS' region element. Position 250 (lysine 250) interacts with ATP.

The protein belongs to the class-I aminoacyl-tRNA synthetase family. Glutamate--tRNA ligase type 1 subfamily. Monomer.

Its subcellular location is the cytoplasm. It carries out the reaction tRNA(Glu) + L-glutamate + ATP = L-glutamyl-tRNA(Glu) + AMP + diphosphate. Functionally, catalyzes the attachment of glutamate to tRNA(Glu) in a two-step reaction: glutamate is first activated by ATP to form Glu-AMP and then transferred to the acceptor end of tRNA(Glu). This Parasynechococcus marenigrum (strain WH8102) protein is Glutamate--tRNA ligase.